The primary structure comprises 742 residues: 5-methyltetrahydropteroyltriglutamate--homocysteine methyltransferase (742 aa).

5-methyltetrahydropteroyltri-L-glutamate is bound by residues 18–21 and K112; that span reads REWK. L-homocysteine-binding positions include 420 to 422 and E473; that span reads IGS. L-methionine-binding positions include 420-422 and E473; that span reads IGS. W550 provides a ligand contact to 5-methyltetrahydropteroyltri-L-glutamate. D588 contacts L-homocysteine. D588 contributes to the L-methionine binding site. E594 lines the 5-methyltetrahydropteroyltri-L-glutamate pocket. The Zn(2+) site is built by H630, C632, and E654. H683 functions as the Proton donor in the catalytic mechanism. C715 is a binding site for Zn(2+).

Belongs to the vitamin-B12 independent methionine synthase family. The cofactor is Zn(2+).

It catalyses the reaction 5-methyltetrahydropteroyltri-L-glutamate + L-homocysteine = tetrahydropteroyltri-L-glutamate + L-methionine. Its pathway is amino-acid biosynthesis; L-methionine biosynthesis via de novo pathway; L-methionine from L-homocysteine (MetE route): step 1/1. In terms of biological role, catalyzes the transfer of a methyl group from 5-methyltetrahydrofolate to homocysteine resulting in methionine formation. This chain is 5-methyltetrahydropteroyltriglutamate--homocysteine methyltransferase, found in Staphylococcus aureus (strain Mu3 / ATCC 700698).